A 509-amino-acid polypeptide reads, in one-letter code: MNENKDTDSKKSEEYEDDFEKDLEWLINENEKSDASIIEMACEKEENINQDLKENETVMEHTKRHSDPDKSLQDEVSPRRNDIISVPGIQPLDPISDSDSENSFQESKLESQKDLEEEEDEEVRRYIMEKIVQANKLLQNQEPVNDKRERKLKFKDQLVDLEVPPLEDTTTFKNYFENERNMFGKLSQLCISNDFGQEDVLLSLTNGSCEENKDRTILVERDGKFELLNLQDIASQGFLPPINNANSTENDPQQLLPRSSNSSVSGTKKEDSTAKIHAVTHSSTGEPLAYIAQPPLNRKTCPSSAVNSDRSKGNGKSNHRTQSAHISPVTSTYCLSPRQKELQKQLEEKREKLKREEERRKIEEEKEKKRENDIVFKAWLQKKREQVLEMRRIQRAKEIEDMNSRQENRDPQQAFRLWLKKKHEEQMKERQTEELRKQEECLFFLKGTEGRERAFKQWLRRKRMEKMAEQQAVRERTRQLRLEAKRSKQLQHHLYMSEAKPFRFTDHYN.

A compositionally biased stretch (basic and acidic residues) spans 46 to 82 (ENINQDLKENETVMEHTKRHSDPDKSLQDEVSPRRND). 2 disordered regions span residues 46-120 (ENIN…EEED) and 241-367 (PINN…EEKE). Polar residues-rich tracts occupy residues 243–266 (NNANSTENDPQQLLPRSSNSSVSG) and 300–334 (TCPSSAVNSDRSKGNGKSNHRTQSAHISPVTSTYC). Positions 335-375 (LSPRQKELQKQLEEKREKLKREEERRKIEEEKEKKRENDIV) form a coiled coil. The segment covering 338–367 (RQKELQKQLEEKREKLKREEERRKIEEEKE) has biased composition (basic and acidic residues).

This sequence belongs to the CCDC181 family. As to quaternary structure, homodimer. Interacts with HOOK1. Interacts with HOOK2. Interacts with HOOK3.

It is found in the cytoplasm. Its subcellular location is the cytoskeleton. The protein resides in the cell projection. It localises to the cilium. The protein localises to the flagellum. Microtubule-binding protein that localizes to the microtubular manchette of elongating spermatids. This is Coiled-coil domain-containing protein 181 from Homo sapiens (Human).